The primary structure comprises 133 residues: MAKEFGRPQRVAQEMQKEIALILQREIKDPRVGMMTTVSGVEMSRDLAYAKVFVTFLNDQDEAAVKNGIKALQEASGFIRSLLGKAMRLRIVPELTFFYDNSLVEGMRMSNLVTTVVKHDDERRVNPDDEKED.

This sequence belongs to the RbfA family. Monomer. Binds 30S ribosomal subunits, but not 50S ribosomal subunits or 70S ribosomes.

The protein localises to the cytoplasm. Functionally, one of several proteins that assist in the late maturation steps of the functional core of the 30S ribosomal subunit. Associates with free 30S ribosomal subunits (but not with 30S subunits that are part of 70S ribosomes or polysomes). Required for efficient processing of 16S rRNA. May interact with the 5'-terminal helix region of 16S rRNA. The chain is Ribosome-binding factor A from Enterobacter sp. (strain 638).